We begin with the raw amino-acid sequence, 342 residues long: MQFIDQAQIEVEAGKGGDGIVAFRREKYVPAGGPSGGNGGRGGSVVFVAVENLQTLLDFRYKHIFKADDGGRGGPNNCTGASGKDLIVQVPCGTTIYDAETGDLLGDLTQPNQQLLIAAGGKGGLGNQYFLSNRNRAPEYSLPGLPGERKLLRLELKLLAEVGIIGLPNAGKSTLISSLSAARPKIADYPFTTLIPNLGVVRKPTGDGTVFADIPGLIEGAADGAGLGHDFLRHIERTRVLLHLIDATSDDVIRDYNTIEQELQAYGRGLSERMQIVALNKIDAVDRETVDLDALATQLNHLSHAPVFLISAVTRTGLEPMLQEVWGILDQVNALEEAEVFR.

Residues 1 to 159 (MQFIDQAQIE…KLLRLELKLL (159 aa)) enclose the Obg domain. One can recognise an OBG-type G domain in the interval 160-330 (AEVGIIGLPN…MLQEVWGILD (171 aa)). GTP contacts are provided by residues 166–173 (GLPNAGKS), 191–195 (FTTLI), 213–216 (DIPG), 280–283 (NKID), and 311–313 (SAV). 2 residues coordinate Mg(2+): S173 and T193.

This sequence belongs to the TRAFAC class OBG-HflX-like GTPase superfamily. OBG GTPase family. As to quaternary structure, monomer. Mg(2+) is required as a cofactor.

It localises to the cytoplasm. Functionally, an essential GTPase which binds GTP, GDP and possibly (p)ppGpp with moderate affinity, with high nucleotide exchange rates and a fairly low GTP hydrolysis rate. Plays a role in control of the cell cycle, stress response, ribosome biogenesis and in those bacteria that undergo differentiation, in morphogenesis control. This is GTPase Obg from Trichormus variabilis (strain ATCC 29413 / PCC 7937) (Anabaena variabilis).